The primary structure comprises 427 residues: C4-dicarboxylate TRAP transporter large permease protein DctM (427 aa).

Transmembrane regions (helical) follow at residues T2–V22, T55–A75, G91–S111, V115–F135, G138–V158, F171–I191, A216–T236, P237–R257, L274–T294, L310–M330, I335–I355, I359–F379, and A396–V416.

It belongs to the TRAP transporter large permease family. The complex comprises the extracytoplasmic solute receptor protein DctP, and the two transmembrane proteins DctQ and DctM.

Its subcellular location is the cell inner membrane. Functionally, part of the tripartite ATP-independent periplasmic (TRAP) transport system DctPQM involved in C4-dicarboxylates uptake. The sequence is that of C4-dicarboxylate TRAP transporter large permease protein DctM from Pseudomonas aeruginosa (strain ATCC 15692 / DSM 22644 / CIP 104116 / JCM 14847 / LMG 12228 / 1C / PRS 101 / PAO1).